The sequence spans 153 residues: Glycosylation-dependent cell adhesion molecule 1 (153 aa).

The signal sequence occupies residues 1–18 (MKFLCVLLLASLAATSLA). Residue threonine 34 is glycosylated (O-linked (GalNAc...) threonine; partial). A phosphoserine mark is found at serine 47, serine 52, serine 56, serine 58, and serine 64. The O-linked (HexNAc...) serine glycan is linked to serine 78. Asparagine 95 carries N-linked (GlcNAc...) asparagine glycosylation. A disordered region spans residues 95–115 (NATLGSEETTEHTPSDASTTE). Threonine 104 is a glycosylation site (O-linked (GalNAc...) threonine).

It belongs to the PP3/GlyCAM-1 family. As to expression, highly and specifically expressed in the lactating mammary gland.

The protein localises to the membrane. This chain is Glycosylation-dependent cell adhesion molecule 1 (GLYCAM1), found in Bos taurus (Bovine).